Consider the following 401-residue polypeptide: Dual-specificity RNA methyltransferase RlmN (401 aa).

Glutamate 114 acts as the Proton acceptor in catalysis. Positions 120–365 (DKGRGTLCVS…TMVRRTRGDD (246 aa)) constitute a Radical SAM core domain. Residues cysteine 127 and cysteine 370 are joined by a disulfide bond. Residues cysteine 134, cysteine 138, and cysteine 141 each coordinate [4Fe-4S] cluster. Residues 187–188 (GE), serine 219, 241–243 (SLH), and asparagine 327 each bind S-adenosyl-L-methionine. Catalysis depends on cysteine 370, which acts as the S-methylcysteine intermediate.

This sequence belongs to the radical SAM superfamily. RlmN family. [4Fe-4S] cluster serves as cofactor.

It is found in the cytoplasm. The catalysed reaction is adenosine(2503) in 23S rRNA + 2 reduced [2Fe-2S]-[ferredoxin] + 2 S-adenosyl-L-methionine = 2-methyladenosine(2503) in 23S rRNA + 5'-deoxyadenosine + L-methionine + 2 oxidized [2Fe-2S]-[ferredoxin] + S-adenosyl-L-homocysteine. It catalyses the reaction adenosine(37) in tRNA + 2 reduced [2Fe-2S]-[ferredoxin] + 2 S-adenosyl-L-methionine = 2-methyladenosine(37) in tRNA + 5'-deoxyadenosine + L-methionine + 2 oxidized [2Fe-2S]-[ferredoxin] + S-adenosyl-L-homocysteine. Specifically methylates position 2 of adenine 2503 in 23S rRNA and position 2 of adenine 37 in tRNAs. m2A2503 modification seems to play a crucial role in the proofreading step occurring at the peptidyl transferase center and thus would serve to optimize ribosomal fidelity. The sequence is that of Dual-specificity RNA methyltransferase RlmN from Xanthomonas campestris pv. campestris (strain 8004).